The sequence spans 111 residues: Large ribosomal subunit protein uL22 (111 aa).

It belongs to the universal ribosomal protein uL22 family. Part of the 50S ribosomal subunit.

This protein binds specifically to 23S rRNA; its binding is stimulated by other ribosomal proteins, e.g. L4, L17, and L20. It is important during the early stages of 50S assembly. It makes multiple contacts with different domains of the 23S rRNA in the assembled 50S subunit and ribosome. Its function is as follows. The globular domain of the protein is located near the polypeptide exit tunnel on the outside of the subunit, while an extended beta-hairpin is found that lines the wall of the exit tunnel in the center of the 70S ribosome. This is Large ribosomal subunit protein uL22 from Stenotrophomonas maltophilia (strain R551-3).